The following is a 146-amino-acid chain: UPF0178 protein BCA_3127 (146 aa).

It belongs to the UPF0178 family.

This chain is UPF0178 protein BCA_3127, found in Bacillus cereus (strain 03BB102).